The primary structure comprises 313 residues: tRNA-cytidine(32) 2-sulfurtransferase (313 aa).

Positions S60–S65 match the PP-loop motif motif. Positions 135, 138, and 226 each coordinate [4Fe-4S] cluster.

The protein belongs to the TtcA family. As to quaternary structure, homodimer. Mg(2+) is required as a cofactor. Requires [4Fe-4S] cluster as cofactor.

The protein resides in the cytoplasm. The enzyme catalyses cytidine(32) in tRNA + S-sulfanyl-L-cysteinyl-[cysteine desulfurase] + AH2 + ATP = 2-thiocytidine(32) in tRNA + L-cysteinyl-[cysteine desulfurase] + A + AMP + diphosphate + H(+). It functions in the pathway tRNA modification. Functionally, catalyzes the ATP-dependent 2-thiolation of cytidine in position 32 of tRNA, to form 2-thiocytidine (s(2)C32). The sulfur atoms are provided by the cysteine/cysteine desulfurase (IscS) system. The polypeptide is tRNA-cytidine(32) 2-sulfurtransferase (Delftia acidovorans (strain DSM 14801 / SPH-1)).